Consider the following 58-residue polypeptide: Small ribosomal subunit protein bS21 (58 aa).

The protein belongs to the bacterial ribosomal protein bS21 family.

This Lactobacillus johnsonii (strain CNCM I-12250 / La1 / NCC 533) protein is Small ribosomal subunit protein bS21.